Reading from the N-terminus, the 126-residue chain is Large ribosomal subunit protein bL17 (126 aa).

This sequence belongs to the bacterial ribosomal protein bL17 family. Part of the 50S ribosomal subunit. Contacts protein L32.

The polypeptide is Large ribosomal subunit protein bL17 (Aliivibrio salmonicida (strain LFI1238) (Vibrio salmonicida (strain LFI1238))).